A 209-amino-acid chain; its full sequence is ATP synthase subunit O, mitochondrial (209 aa).

It belongs to the ATPase delta chain family. As to quaternary structure, F-type ATPases have 2 components, CF(1) - the catalytic core - and CF(0) - the membrane proton channel. CF(1) has five subunits: alpha(3), beta(3), gamma(1), delta(1), epsilon(1). CF(0) has three main subunits: a, b and c.

The protein localises to the mitochondrion. It is found in the mitochondrion inner membrane. Its function is as follows. Mitochondrial membrane ATP synthase (F(1)F(0) ATP synthase or Complex V) produces ATP from ADP in the presence of a proton gradient across the membrane which is generated by electron transport complexes of the respiratory chain. F-type ATPases consist of two structural domains, F(1) - containing the extramembraneous catalytic core and F(0) - containing the membrane proton channel, linked together by a central stalk and a peripheral stalk. During catalysis, ATP synthesis in the catalytic domain of F(1) is coupled via a rotary mechanism of the central stalk subunits to proton translocation. Part of the complex F(0) domain and the peripheric stalk, which acts as a stator to hold the catalytic alpha(3)beta(3) subcomplex and subunit a/ATP6 static relative to the rotary elements. The protein is ATP synthase subunit O, mitochondrial of Drosophila melanogaster (Fruit fly).